Reading from the N-terminus, the 179-residue chain is Large ribosomal subunit protein uL5 (179 aa).

This sequence belongs to the universal ribosomal protein uL5 family. As to quaternary structure, part of the 50S ribosomal subunit; part of the 5S rRNA/L5/L18/L25 subcomplex. Contacts the 5S rRNA and the P site tRNA. Forms a bridge to the 30S subunit in the 70S ribosome.

This is one of the proteins that bind and probably mediate the attachment of the 5S RNA into the large ribosomal subunit, where it forms part of the central protuberance. In the 70S ribosome it contacts protein S13 of the 30S subunit (bridge B1b), connecting the 2 subunits; this bridge is implicated in subunit movement. Contacts the P site tRNA; the 5S rRNA and some of its associated proteins might help stabilize positioning of ribosome-bound tRNAs. This chain is Large ribosomal subunit protein uL5, found in Vesicomyosocius okutanii subsp. Calyptogena okutanii (strain HA).